Reading from the N-terminus, the 20-residue chain is Neurotoxin BmK 18(2) (20 aa).

The region spanning 2-20 (RDAYIAEDYDCVYHCARDA) is the LCN-type CS-alpha/beta domain.

This sequence belongs to the long (4 C-C) scorpion toxin superfamily. Sodium channel inhibitor family. Alpha subfamily. As to expression, expressed by the venom gland.

The protein localises to the secreted. Functionally, binds to sodium channels (Nav) and inhibits the inactivation of the activated channels, thereby blocking neuronal transmission. The chain is Neurotoxin BmK 18(2) from Olivierus martensii (Manchurian scorpion).